The sequence spans 175 residues: Snake venom metalloproteinase BpMP-1 (175 aa).

In terms of domain architecture, Peptidase M12B spans 1–175; the sequence is YIELAVVADH…KHNPQCILNK (175 aa). Ca(2+) is bound by residues Glu-3 and Asp-74. Disulfide bonds link Cys-98-Cys-171, Cys-131-Cys-155, and Cys-133-Cys-138. His-117 is a Zn(2+) binding site. Glu-118 is an active-site residue. Residues His-121 and His-127 each coordinate Zn(2+). Ca(2+) contacts are provided by Cys-171 and Asn-174.

The protein belongs to the venom metalloproteinase (M12B) family. P-I subfamily. As to quaternary structure, monomer. The cofactor is Zn(2+). As to expression, expressed by the venom gland.

It localises to the secreted. Inhibited by EDTA, 1,10-phenanthroline and beta-mercaptoethanol. Not inhibited by the serine protease inhibitors aprotinin and benzamidin. In terms of biological role, non-hemorrhagic snake venom zinc metalloprotease that hydrolyzes the Aalpha-chain of fibrinogen, more slowly the Bbeta-chain and shows no effect on the gamma chain. Has no coagulant activity on bovine plasma and fibrinogen. This chain is Snake venom metalloproteinase BpMP-1, found in Bothrops pauloensis (Neuwied's lancehead).